We begin with the raw amino-acid sequence, 60 residues long: Protein YoaG (60 aa).

As to quaternary structure, homodimer.

The chain is Protein YoaG (yoaG) from Escherichia coli O157:H7.